We begin with the raw amino-acid sequence, 234 residues long: Hydrolase in agr operon (234 aa).

In terms of domain architecture, CN hydrolase spans 1-212; sequence ILYNKDTDVV…EKELTVTIDI (212 aa). The Proton acceptor role is filled by glutamate 14. The active-site Proton donor is lysine 83. Cysteine 119 functions as the Nucleophile in the catalytic mechanism.

The protein belongs to the carbon-nitrogen hydrolase superfamily. NIT1/NIT2 family.

This chain is Hydrolase in agr operon, found in Staphylococcus lugdunensis.